A 427-amino-acid chain; its full sequence is 3-phosphoshikimate 1-carboxyvinyltransferase (427 aa).

The 3-phosphoshikimate site is built by K20, S21, and R25. Phosphoenolpyruvate is bound at residue K20. Phosphoenolpyruvate-binding residues include G92 and R120. 4 residues coordinate 3-phosphoshikimate: S166, Q168, D312, and K339. A phosphoenolpyruvate-binding site is contributed by Q168. The active-site Proton acceptor is the D312. R343 and R385 together coordinate phosphoenolpyruvate.

This sequence belongs to the EPSP synthase family. As to quaternary structure, monomer.

It is found in the cytoplasm. The catalysed reaction is 3-phosphoshikimate + phosphoenolpyruvate = 5-O-(1-carboxyvinyl)-3-phosphoshikimate + phosphate. Its pathway is metabolic intermediate biosynthesis; chorismate biosynthesis; chorismate from D-erythrose 4-phosphate and phosphoenolpyruvate: step 6/7. Catalyzes the transfer of the enolpyruvyl moiety of phosphoenolpyruvate (PEP) to the 5-hydroxyl of shikimate-3-phosphate (S3P) to produce enolpyruvyl shikimate-3-phosphate and inorganic phosphate. The chain is 3-phosphoshikimate 1-carboxyvinyltransferase from Streptococcus pyogenes serotype M28 (strain MGAS6180).